Here is a 555-residue protein sequence, read N- to C-terminus: Urocanate hydratase (555 aa).

NAD(+) contacts are provided by residues 51-52 (GG), Gln129, 175-177 (GMG), Glu195, 262-266 (QTSAH), 272-273 (YL), and Tyr321. Residue Cys409 is part of the active site. NAD(+) is bound at residue Gly491.

The protein belongs to the urocanase family. NAD(+) serves as cofactor.

Its subcellular location is the cytoplasm. The enzyme catalyses 4-imidazolone-5-propanoate = trans-urocanate + H2O. It functions in the pathway amino-acid degradation; L-histidine degradation into L-glutamate; N-formimidoyl-L-glutamate from L-histidine: step 2/3. In terms of biological role, catalyzes the conversion of urocanate to 4-imidazolone-5-propionate. The chain is Urocanate hydratase from Xanthomonas axonopodis pv. citri (strain 306).